Here is a 209-residue protein sequence, read N- to C-terminus: Dual specificity phosphatase 29 (209 aa).

A Tyrosine-protein phosphatase domain is found at 44–193 (NHVNEVWPNL…LRELDIQLAL (150 aa)). Residue 137–144 (NCAMGRSR) coordinates substrate. The active-site Phosphocysteine intermediate is Cys138.

The protein belongs to the protein-tyrosine phosphatase family. Non-receptor class dual specificity subfamily.

It localises to the cytoplasm. The protein localises to the nucleus. It catalyses the reaction O-phospho-L-tyrosyl-[protein] + H2O = L-tyrosyl-[protein] + phosphate. The enzyme catalyses O-phospho-L-seryl-[protein] + H2O = L-seryl-[protein] + phosphate. The catalysed reaction is O-phospho-L-threonyl-[protein] + H2O = L-threonyl-[protein] + phosphate. Its function is as follows. Dual specificity phosphatase able to dephosphorylate phosphotyrosine, phosphoserine and phosphothreonine residues within the same substrate, with a preference for phosphotyrosine as a substrate. Involved in the modulation of AMPK and MAPK1/2 signaling pathways. The chain is Dual specificity phosphatase 29 (dusp29) from Xenopus tropicalis (Western clawed frog).